Consider the following 85-residue polypeptide: MAFAQAGGGGGQRRPFFRRRKTCPFSGPNAPKIDYKDVRLLQRYISERGKIVPSRITAVSAKKQRELSAAIKRARFLGLLPFVIR.

The segment covering Met-1 to Gln-12 has biased composition (gly residues). Positions Met-1–Thr-22 are disordered.

Belongs to the bacterial ribosomal protein bS18 family. Part of the 30S ribosomal subunit. Forms a tight heterodimer with protein bS6.

Functionally, binds as a heterodimer with protein bS6 to the central domain of the 16S rRNA, where it helps stabilize the platform of the 30S subunit. The polypeptide is Small ribosomal subunit protein bS18 (Azorhizobium caulinodans (strain ATCC 43989 / DSM 5975 / JCM 20966 / LMG 6465 / NBRC 14845 / NCIMB 13405 / ORS 571)).